A 136-amino-acid polypeptide reads, in one-letter code: NADH-ubiquinone oxidoreductase chain 3 (136 aa).

3 helical membrane-spanning segments follow: residues 5–25, 55–75, and 85–105; these read TFFLFLIPVLAIILLAVNLIF, ISFFIFALLFLLFDLEILLVY, and GIYGLVIMLVFFLVGTLGFAF.

This sequence belongs to the complex I subunit 3 family.

The protein resides in the mitochondrion membrane. The catalysed reaction is a ubiquinone + NADH + 5 H(+)(in) = a ubiquinol + NAD(+) + 4 H(+)(out). Its function is as follows. Core subunit of the mitochondrial membrane respiratory chain NADH dehydrogenase (Complex I) that is believed to belong to the minimal assembly required for catalysis. Complex I functions in the transfer of electrons from NADH to the respiratory chain. The immediate electron acceptor for the enzyme is believed to be ubiquinone. In Emericella nidulans (Aspergillus nidulans), this protein is NADH-ubiquinone oxidoreductase chain 3 (nd3).